The following is a 185-amino-acid chain: CASP-like protein 2C2 (185 aa).

Topologically, residues 1–22 are cytoplasmic; the sequence is MAAAARVSEVKAEGLLRGACTA. The helical transmembrane segment at 23–43 threads the bilayer; sequence LAAAAALLVGLSTQTETVLLV. The Extracellular segment spans residues 44-53; that stretch reads RKKATVKDVQ. The chain crosses the membrane as a helical span at residues 54–74; sequence ALWVLAMAAAAAAGYHLLQLL. At 75 to 104 the chain is on the cytoplasmic side; sequence KCLYLGRVGGARPCRRSSRALAWTCLLLDK. A helical transmembrane segment spans residues 105–125; that stretch reads ACAYTTFATTVAAAQACVVAL. At 126 to 146 the chain is on the extracellular side; sequence DGAHALQWTKLCNIYTRFCEQ. The chain crosses the membrane as a helical span at residues 147–167; the sequence is VAGSLVLGMLAAVGTAVLSAA. Over 168-185 the chain is Cytoplasmic; that stretch reads SARNVFRHYASLETYAAH.

It belongs to the Casparian strip membrane proteins (CASP) family. In terms of assembly, homodimer and heterodimers.

The protein resides in the cell membrane. This chain is CASP-like protein 2C2, found in Zea mays (Maize).